A 383-amino-acid chain; its full sequence is ATP phosphoribosyltransferase regulatory subunit (383 aa).

This sequence belongs to the class-II aminoacyl-tRNA synthetase family. HisZ subfamily. Heteromultimer composed of HisG and HisZ subunits.

It is found in the cytoplasm. It participates in amino-acid biosynthesis; L-histidine biosynthesis; L-histidine from 5-phospho-alpha-D-ribose 1-diphosphate: step 1/9. Required for the first step of histidine biosynthesis. May allow the feedback regulation of ATP phosphoribosyltransferase activity by histidine. The sequence is that of ATP phosphoribosyltransferase regulatory subunit from Desulfitobacterium hafniense (strain Y51).